Reading from the N-terminus, the 5147-residue chain is Cadherin-related tumor suppressor (5147 aa).

The signal sequence occupies residues 1-35 (MERLLLLFFLLLAGRESLCQTGDTKLELLAPRGRS). Cadherin domains are found at residues 36 to 156 (YATT…SPEF), 157 to 270 (PEPS…PPIF), 271 to 382 (DHSD…DPII), 383 to 494 (SFRF…EPVF), 495 to 599 (EKSE…APQF), 600 to 708 (SQRE…DPQF), 709 to 820 (YPRH…LEML), 821 to 942 (ECGQ…APVF), 943 to 1049 (ALDR…TPVF), 1050 to 1153 (DHTS…APQF), 1154 to 1278 (TNST…APEF), 1279 to 1384 (LRAP…APEF), 1385 to 1489 (TQSS…PPIF), 1490 to 1601 (PSTA…APVF), 1602 to 1713 (VSMN…VPQF), 1714 to 1823 (EQRS…PPQF), 1824 to 1922 (LDTP…PPLF), 1923 to 2027 (EDTV…APIF), 2028 to 2167 (DPMS…VPVF), 2168 to 2278 (ISAN…SPVF), 2279 to 2385 (DPKQ…PTFL), 2386 to 2491 (DSPY…DPVF), 2492 to 2596 (ELQS…IPKF), 2597 to 2703 (DSTT…FPTF), 2704 to 2810 (AYMA…APVM), 2811 to 2913 (EQLI…PPKF), 2914 to 3013 (TRLF…APEF), 3014 to 3124 (EHSF…PPKF), 3125 to 3229 (EQAE…TPRF), 3230 to 3334 (SVNS…PPVF), 3335 to 3439 (NHKE…YPQF), 3440 to 3545 (LQPV…PPEF), 3546 to 3651 (IKHY…GPTF), and 3652 to 3756 (TPEG…NPST). At 36–4583 (YATTYEQYAA…GQDAAQVADP (4548 aa)) the chain is on the extracellular side. N-linked (GlcNAc...) asparagine glycans are attached at residues Asn-239, Asn-257, Asn-276, Asn-280, Asn-402, and Asn-461. N-linked (GlcNAc...) asparagine glycans are attached at residues Asn-605 and Asn-631. 3 N-linked (GlcNAc...) asparagine glycosylation sites follow: Asn-1155, Asn-1367, and Asn-1458. 3 N-linked (GlcNAc...) asparagine glycosylation sites follow: Asn-1751, Asn-1831, and Asn-1880. N-linked (GlcNAc...) asparagine glycosylation is found at Asn-2080, Asn-2171, Asn-2247, Asn-2290, Asn-2437, and Asn-2581. A glycan (N-linked (GlcNAc...) asparagine) is linked at Asn-2799. 3 N-linked (GlcNAc...) asparagine glycosylation sites follow: Asn-2920, Asn-2946, and Asn-2967. N-linked (GlcNAc...) asparagine glycans are attached at residues Asn-3167, Asn-3303, Asn-3386, Asn-3389, and Asn-3525. N-linked (GlcNAc...) asparagine glycosylation is found at Asn-3852, Asn-3865, and Asn-3905. EGF-like domains lie at 3950–4011 (GYEP…EQCS), 4013–4049 (RQDP…KHCE), 4052–4090 (RSDV…NQCE), and 4092–4128 (VSDS…RHCE). 16 disulfides stabilise this stretch: Cys-3954-Cys-3966, Cys-3960-Cys-3999, Cys-4001-Cys-4010, Cys-4017-Cys-4028, Cys-4022-Cys-4037, Cys-4039-Cys-4048, Cys-4056-Cys-4067, Cys-4061-Cys-4078, Cys-4080-Cys-4089, Cys-4096-Cys-4107, Cys-4101-Cys-4116, Cys-4118-Cys-4127, Cys-4294-Cys-4320, Cys-4325-Cys-4341, Cys-4334-Cys-4350, and Cys-4352-Cys-4361. Residues 4129-4320 (RFSYGFQPLS…LQQKGILAGC (192 aa)) form the Laminin G-like 1 domain. A glycan (N-linked (GlcNAc...) asparagine) is linked at Asn-4306. The EGF-like 5 domain occupies 4321–4362 (NRQACQPALAAERCGGFAGQCIDRWSSSLCQCGGHLQSPDCS). In terms of domain architecture, Laminin G-like 2 spans 4402 to 4569 (DNQQMRERRA…RYHGKIESGC (168 aa)). N-linked (GlcNAc...) asparagine glycans are attached at residues Asn-4414, Asn-4471, Asn-4487, Asn-4539, and Asn-4550. Cys-4536 and Cys-4569 are oxidised to a cystine. The chain crosses the membrane as a helical span at residues 4584–4609 (LSIGFTLVIVFFVILVVAILGSYVIY). Residues 4610–5147 (RFRGKQEKIG…NGPAAPEEYV (538 aa)) are Cytoplasmic-facing. The essential for stability of mitochondrial electron chain complexes I and V, and promotes interaction with ND-24 stretch occupies residues 4744–4771 (PEHYDLENASSIAPSDIDIVYHYKGYRE). Disordered regions lie at residues 4787–4850 (AYTH…SQQP), 4871–4921 (TSSS…QTSM), and 4967–5041 (GDVD…PIPP). Over residues 4826–4835 (SASRTHQSTP) the composition is skewed to polar residues. 2 stretches are compositionally biased toward low complexity: residues 4838–4850 (RLSP…SQQP) and 4891–4918 (SPVM…QAQQ). Phosphoserine is present on Ser-4843. Residues 4972–5008 (HSSTSTDESGNDSFTCSEIEYDNNSLSGDGKYSTSKS) show a composition bias toward polar residues. A phosphoserine mark is found at Ser-5054 and Ser-5061. Residues 5113 to 5147 (PDTNGPSQQQQQQTQVVSTLRMPSSNGPAAPEEYV) are disordered. The span at 5119 to 5131 (SQQQQQQTQVVST) shows a compositional bias: low complexity.

Interacts with Fbxl7. Ft-mito interacts with NADH dehydrogenase subunit ND-24 and with ATP synthase subunit ATPsynC. Phosphorylated by fj on Ser/Thr of cadherin domains. Phosphorylation by fj enhances binding to ds. Phosphorylated in the cytoplasmic domain in a dco-dependent manner which is promoted by ds. Post-translationally, proteolytically cleaved to yield stably associated N- and C-terminal fragments. The C-terminal fragment is processed further to release a 68 kDa mitochondrial fragment, Ft-mito.

It localises to the cell membrane. The protein localises to the apical cell membrane. The protein resides in the mitochondrion. In terms of biological role, involved in regulation of planar cell polarity in the compound eye where it is required for correct specification of the R3 and R4 photoreceptor cells by regulating Fz activity in the R3/R4 precursor cells. This is likely to occur through creation of an ft gradient so that the equatorial R3/R4 precursor cell has a higher level of ft function than its polar neighbor. Also required for planar cell polarity of wing hairs. Mediates heterophilic cell adhesion in vitro and is required to stabilize ds on the cell surface. Involved in regulation of eye imaginal disk size. Upstream component of the Hippo pathway where it is likely to act as a cell surface receptor involved in regulation of tissue size and is required for the localization and stability of ex. Probably acts as a cell surface receptor for ds. Functionally, regulates mitochondrial electron transport chain integrity and promotes oxidative phosphorylation. In Drosophila melanogaster (Fruit fly), this protein is Cadherin-related tumor suppressor.